A 236-amino-acid chain; its full sequence is tRNA (guanine-N(7)-)-methyltransferase (236 aa).

The S-adenosyl-L-methionine site is built by Asp-35, Glu-60, Asn-87, and Asp-113. Asp-113 is a catalytic residue. Lys-117 and Asp-149 together coordinate substrate.

It belongs to the class I-like SAM-binding methyltransferase superfamily. TrmB family.

The catalysed reaction is guanosine(46) in tRNA + S-adenosyl-L-methionine = N(7)-methylguanosine(46) in tRNA + S-adenosyl-L-homocysteine. It participates in tRNA modification; N(7)-methylguanine-tRNA biosynthesis. Its function is as follows. Catalyzes the formation of N(7)-methylguanine at position 46 (m7G46) in tRNA. This Parasynechococcus marenigrum (strain WH8102) protein is tRNA (guanine-N(7)-)-methyltransferase.